A 37-amino-acid chain; its full sequence is Large ribosomal subunit protein bL36c (37 aa).

Belongs to the bacterial ribosomal protein bL36 family.

It is found in the plastid. It localises to the chloroplast. The protein is Large ribosomal subunit protein bL36c of Gracilaria tenuistipitata var. liui (Red alga).